Consider the following 1236-residue polypeptide: ABC transporter B family member 9 (1236 aa).

The region spanning 33–320 is the ABC transmembrane type-1 1 domain; it reads MTVGTIAAAG…TSPSLNAFAA (288 aa). 6 helical membrane-spanning segments follow: residues 38 to 58, 80 to 100, 158 to 178, 179 to 199, 257 to 277, and 288 to 308; these read IAAA…GQLI, FIYL…CWMV, QLLC…PLLA, GVLC…SLIM, ISGF…GLAV, and GYNG…GMSL. In terms of domain architecture, ABC transporter 1 spans 355–591; sequence IELKDVYFRY…PEGAYSQLVR (237 aa). An ATP-binding site is contributed by 390–397; sequence GQSGSGKS. N542 carries N-linked (GlcNAc...) asparagine glycosylation. A disordered region spans residues 593-616; sequence QEGSKEEATESERPETSLDVERSG. A compositionally biased stretch (basic and acidic residues) spans 594-616; the sequence is EGSKEEATESERPETSLDVERSG. N-linked (GlcNAc...) asparagine glycans are attached at residues N631 and N653. Transmembrane regions (helical) follow at residues 685-705, 725-745, 785-805, 806-826, 902-922, and 927-947; these read VLVL…IFGL, SHFW…MIPV, SLVG…TTGL, IIAF…SPFI, FSFF…AGLI, and ATFG…IGVS. Residues 686–958 enclose the ABC transmembrane type-1 2 domain; that stretch reads LVLGSIAAMV…TSAMAPDSNK (273 aa). Residues 993 to 1230 enclose the ABC transporter 2 domain; the sequence is IEFRHVSFRY…SGGAYASLVT (238 aa). Residue 1028 to 1035 coordinates ATP; sequence GESGSGKS. N-linked (GlcNAc...) asparagine glycans are attached at residues N1082 and N1181.

It belongs to the ABC transporter superfamily. ABCB family. Multidrug resistance exporter (TC 3.A.1.201) subfamily.

The protein resides in the membrane. In Arabidopsis thaliana (Mouse-ear cress), this protein is ABC transporter B family member 9 (ABCB9).